A 253-amino-acid chain; its full sequence is Probable U3 small nucleolar RNA-associated protein 11 (253 aa).

A disordered region spans residues 1 to 21; that stretch reads MAAAFRKAVKSRQREYRERSQ. Glycyl lysine isopeptide (Lys-Gly) (interchain with G-Cter in SUMO2) cross-links involve residues Lys-74, Lys-83, and Lys-86. The residue at position 90 (Thr-90) is a Phosphothreonine. Residues Lys-103, Lys-120, Lys-143, Lys-144, Lys-180, Lys-211, Lys-218, Lys-235, and Lys-236 each participate in a glycyl lysine isopeptide (Lys-Gly) (interchain with G-Cter in SUMO2) cross-link. Ser-241 carries the phosphoserine modification. A Glycyl lysine isopeptide (Lys-Gly) (interchain with G-Cter in SUMO2) cross-link involves residue Lys-246.

The protein belongs to the UTP11 family. As to quaternary structure, part of the small subunit (SSU) processome, composed of more than 70 proteins and the RNA chaperone small nucleolar RNA (snoRNA) U3.

It localises to the nucleus. The protein resides in the nucleolus. In terms of biological role, part of the small subunit (SSU) processome, first precursor of the small eukaryotic ribosomal subunit. During the assembly of the SSU processome in the nucleolus, many ribosome biogenesis factors, an RNA chaperone and ribosomal proteins associate with the nascent pre-rRNA and work in concert to generate RNA folding, modifications, rearrangements and cleavage as well as targeted degradation of pre-ribosomal RNA by the RNA exosome. Involved in nucleolar processing of pre-18S ribosomal RNA. The polypeptide is Probable U3 small nucleolar RNA-associated protein 11 (Rattus norvegicus (Rat)).